The sequence spans 158 residues: Large ribosomal subunit protein uL30 (158 aa).

The protein belongs to the universal ribosomal protein uL30 family. Part of the 50S ribosomal subunit.

This is Large ribosomal subunit protein uL30 from Saccharolobus solfataricus (strain ATCC 35092 / DSM 1617 / JCM 11322 / P2) (Sulfolobus solfataricus).